Consider the following 208-residue polypeptide: MNVNVINHPLVRHKLTLMREADCSTYKFRTLATELARLMAYEASRDFEIEKYLIDGWCGQIEGDRIKGKTLTVVPILRAGLGMLDGVLDLIPTAKISVVGLQRDEETLKPVSYFEKFVDSMDERPALIIDPMLATGGSMVATIDLLKAKGCKNIKALVLVAAPEGVKAVNDAHPDVTIYTAALDSHLNENGYIIPGLGDAGDKIFGTR.

5-phospho-alpha-D-ribose 1-diphosphate is bound by residues arginine 78, arginine 103, and 130–138 (DPMLATGGS). Uracil is bound by residues isoleucine 193 and 198–200 (GDA). Aspartate 199 serves as a coordination point for 5-phospho-alpha-D-ribose 1-diphosphate.

Belongs to the UPRTase family. It depends on Mg(2+) as a cofactor.

The enzyme catalyses UMP + diphosphate = 5-phospho-alpha-D-ribose 1-diphosphate + uracil. It participates in pyrimidine metabolism; UMP biosynthesis via salvage pathway; UMP from uracil: step 1/1. Allosterically activated by GTP. Its function is as follows. Catalyzes the conversion of uracil and 5-phospho-alpha-D-ribose 1-diphosphate (PRPP) to UMP and diphosphate. The sequence is that of Uracil phosphoribosyltransferase from Neisseria meningitidis serogroup A / serotype 4A (strain DSM 15465 / Z2491).